Here is a 484-residue protein sequence, read N- to C-terminus: Probable UDP-N-acetylglucosamine pyrophosphorylase (484 aa).

A Substrate binding motif is present at residues 107 to 110 (LAGG). UTP-binding positions include 107–110 (LAGG), K121, Q200, and G226. Residue N227 participates in substrate binding. D255 serves as a coordination point for UTP. Residues 304–305 (EY) carry the Substrate binding motif. K377 is a binding site for UTP. K407 contributes to the substrate binding site.

This sequence belongs to the UDPGP type 1 family.

It localises to the cytoplasm. It catalyses the reaction N-acetyl-alpha-D-glucosamine 1-phosphate + UTP + H(+) = UDP-N-acetyl-alpha-D-glucosamine + diphosphate. It functions in the pathway nucleotide-sugar biosynthesis; UDP-N-acetyl-alpha-D-glucosamine biosynthesis; UDP-N-acetyl-alpha-D-glucosamine from N-acetyl-alpha-D-glucosamine 1-phosphate: step 1/1. This Caenorhabditis elegans protein is Probable UDP-N-acetylglucosamine pyrophosphorylase.